The chain runs to 848 residues: Trimethylamine-N-oxide reductase 1 (848 aa).

The tat-type signal signal peptide spans 1-39 (MNNNDLFQASRRRFLAQLGGLTVAGMLGTSLLTPRRATA). Serine 191 serves as a coordination point for Mo-bis(molybdopterin guanine dinucleotide).

This sequence belongs to the prokaryotic molybdopterin-containing oxidoreductase family. Mo-bis(molybdopterin guanine dinucleotide) is required as a cofactor. Predicted to be exported by the Tat system. The position of the signal peptide cleavage has not been experimentally proven.

Its subcellular location is the periplasm. It carries out the reaction trimethylamine + 2 Fe(III)-[cytochrome c] + H2O = trimethylamine N-oxide + 2 Fe(II)-[cytochrome c] + 3 H(+). Reduces trimethylamine-N-oxide (TMAO) into trimethylamine; an anaerobic reaction coupled to energy-yielding reactions. The chain is Trimethylamine-N-oxide reductase 1 (torA) from Escherichia coli O6:H1 (strain CFT073 / ATCC 700928 / UPEC).